The primary structure comprises 868 residues: Programmed cell death 6-interacting protein (868 aa).

N-acetylalanine is present on alanine 2. One can recognise a BRO1 domain in the interval 3–392; it reads TFISVQLKKT…AQMREATTLA (390 aa). Residues 176–503 are interaction with CHMP4A, CHMP4B and CHMP4C; the sequence is TVDISPDTVG…NFRTVLDKAV (328 aa). An interaction with EIAV p9 region spans residues 176–868; sequence TVDISPDTVG…PPQQSYYPQQ (693 aa). At lysine 215 the chain carries N6-acetyllysine. An interaction with SDCBP region spans residues 418 to 868; sequence LTKSRSVIEQ…PPQQSYYPQQ (451 aa). Threonine 479 is subject to Phosphothreonine. Serine 481 bears the Phosphoserine mark. A self-association region spans residues 503–868; sequence VQADGQVKEC…PPQQSYYPQQ (366 aa). 2 disordered regions span residues 713–809 and 832–868; these read IARE…YPGY and PYPP…YPQQ. The tract at residues 717 to 720 is interaction with TSG101; sequence PSAP. At serine 730 the chain carries Phosphoserine. The span at 737-763 shows a compositional bias: pro residues; that stretch reads PTPPTPAPRTMPPTKPQPPARPPPPVL. Threonine 738 and threonine 741 each carry phosphothreonine. Residue arginine 745 is modified to Omega-N-methylarginine. A compositionally biased stretch (low complexity) spans 778-791; that stretch reads GAGTAAPAPSQTPG. Pro residues-rich tracts occupy residues 792-807 and 844-860; these read SAPP…PTYP and APYP…PQPP. Positions 801-806 are interaction with CEP55; it reads PPYPTY. An essential to promote virus budding region spans residues 864–868; the sequence is YYPQQ.

As to quaternary structure, self-associates. Interacts with SH3KBP1/CIN85. Interacts with PDCD6 in a calcium -dependent manner. Interacts with TSG101 in a calcium-dependent manner; PDCD6IP homooligomerization may be required for TSG101-binding. Interacts with SGSM3. Directly interacts with CHMP4A, CHMP4B and CHMP4C. Directly interacts with CEP55 in a 1:2 stoechiometry. The interaction with CEP55 is required for PDCD6IP targeting to the midbody. May interact with PDGFRB. Interacts with SH3GL1 and SH3GL2/endophilin-1. Forms a complex with SDCBP and SDC2. Found in a complex with F-actin, TJP1/ZO-1 and PARD3. Interacts with CD2AP. Interacts with ARRDC1. Interacts (via BRO1 domain) with the ATG12-ATG3 conjugate; this interaction is bridged by ATG12 and promotes multiple PDCD6IP-mediated functions such as endolysosomal trafficking, macroautophagy and exosome biogenesis. In terms of assembly, (Microbial infection) Interacts with HIV-1 p6. Interacts with HIV-1 p9. (Microbial infection) Interacts with EIAV p9. As to quaternary structure, (Microbial infection) Interacts with Murine leukemia virus Gag polyprotein (via LYPX(n)L motif). In terms of assembly, (Microbial infection) Interacts with ebola virus protein VP40 (via YPx(n)L/I motif). In terms of processing, may be phosphorylated on tyrosine residues by activated PDGFRB.

Its subcellular location is the cytoplasm. It is found in the cytosol. The protein localises to the melanosome. It localises to the cytoskeleton. The protein resides in the microtubule organizing center. Its subcellular location is the centrosome. It is found in the secreted. The protein localises to the extracellular exosome. It localises to the cell junction. The protein resides in the tight junction. Its subcellular location is the midbody. It is found in the midbody ring. Multifunctional protein involved in endocytosis, multivesicular body biogenesis, membrane repair, cytokinesis, apoptosis and maintenance of tight junction integrity. Class E VPS protein involved in concentration and sorting of cargo proteins of the multivesicular body (MVB) for incorporation into intralumenal vesicles (ILVs) that are generated by invagination and scission from the limiting membrane of the endosome. Binds to the phospholipid lysobisphosphatidic acid (LBPA) which is abundant in MVBs internal membranes. The MVB pathway requires the sequential function of ESCRT-O, -I,-II and -III complexes. The ESCRT machinery also functions in topologically equivalent membrane fission events, such as the terminal stages of cytokinesis. Adapter for a subset of ESCRT-III proteins, such as CHMP4, to function at distinct membranes. Required for completion of cytokinesis. May play a role in the regulation of both apoptosis and cell proliferation. Regulates exosome biogenesis in concert with SDC1/4 and SDCBP. By interacting with F-actin, PARD3 and TJP1 secures the proper assembly and positioning of actomyosin-tight junction complex at the apical sides of adjacent epithelial cells that defines a spatial membrane domain essential for the maintenance of epithelial cell polarity and barrier. Its function is as follows. (Microbial infection) Involved in HIV-1 virus budding. Can replace TSG101 it its role of supporting HIV-1 release; this function requires the interaction with CHMP4B. The ESCRT machinery also functions in topologically equivalent membrane fission events, such as enveloped virus budding (HIV-1 and other lentiviruses). The protein is Programmed cell death 6-interacting protein of Homo sapiens (Human).